We begin with the raw amino-acid sequence, 295 residues long: Pyridoxal 5'-phosphate synthase subunit PdxS (295 aa).

D25 provides a ligand contact to D-ribose 5-phosphate. The active-site Schiff-base intermediate with D-ribose 5-phosphate is the K82. G154 provides a ligand contact to D-ribose 5-phosphate. R166 contributes to the D-glyceraldehyde 3-phosphate binding site. Residues G215 and 236–237 contribute to the D-ribose 5-phosphate site; that span reads GS.

The protein belongs to the PdxS/SNZ family. In the presence of PdxT, forms a dodecamer of heterodimers.

It carries out the reaction aldehydo-D-ribose 5-phosphate + D-glyceraldehyde 3-phosphate + L-glutamine = pyridoxal 5'-phosphate + L-glutamate + phosphate + 3 H2O + H(+). It participates in cofactor biosynthesis; pyridoxal 5'-phosphate biosynthesis. Functionally, catalyzes the formation of pyridoxal 5'-phosphate from ribose 5-phosphate (RBP), glyceraldehyde 3-phosphate (G3P) and ammonia. The ammonia is provided by the PdxT subunit. Can also use ribulose 5-phosphate and dihydroxyacetone phosphate as substrates, resulting from enzyme-catalyzed isomerization of RBP and G3P, respectively. The sequence is that of Pyridoxal 5'-phosphate synthase subunit PdxS from Bacillus cytotoxicus (strain DSM 22905 / CIP 110041 / 391-98 / NVH 391-98).